The sequence spans 131 residues: D-ribose pyranase (131 aa).

The active-site Proton donor is the His20. Residues Asp28, His98, and 120–122 each bind substrate; that span reads FSN.

This sequence belongs to the RbsD / FucU family. RbsD subfamily. Homodecamer.

The protein localises to the cytoplasm. The enzyme catalyses beta-D-ribopyranose = beta-D-ribofuranose. It functions in the pathway carbohydrate metabolism; D-ribose degradation; D-ribose 5-phosphate from beta-D-ribopyranose: step 1/2. In terms of biological role, catalyzes the interconversion of beta-pyran and beta-furan forms of D-ribose. The polypeptide is D-ribose pyranase (Petrotoga mobilis (strain DSM 10674 / SJ95)).